The sequence spans 325 residues: Elongation factor P--(R)-beta-lysine ligase (325 aa).

76-78 (SPE) serves as a coordination point for substrate. ATP contacts are provided by residues 100 to 102 (RNE) and Asn109. Tyr118 contributes to the substrate binding site. 244-245 (EL) contacts ATP. Glu251 is a substrate binding site. Gly300 contributes to the ATP binding site.

It belongs to the class-II aminoacyl-tRNA synthetase family. EpmA subfamily. In terms of assembly, homodimer.

The enzyme catalyses D-beta-lysine + L-lysyl-[protein] + ATP = N(6)-((3R)-3,6-diaminohexanoyl)-L-lysyl-[protein] + AMP + diphosphate + H(+). Its function is as follows. With EpmB is involved in the beta-lysylation step of the post-translational modification of translation elongation factor P (EF-P). Catalyzes the ATP-dependent activation of (R)-beta-lysine produced by EpmB, forming a lysyl-adenylate, from which the beta-lysyl moiety is then transferred to the epsilon-amino group of a conserved specific lysine residue in EF-P. The protein is Elongation factor P--(R)-beta-lysine ligase of Yersinia enterocolitica serotype O:8 / biotype 1B (strain NCTC 13174 / 8081).